The following is a 1296-amino-acid chain: Phosphoribosylformylglycinamidine synthase (1296 aa).

Residues 300–325 (APFSGAATGSGGEIRDEGATGRGSKP) form a disordered region. ATP-binding positions include 304-315 (GAATGSGGEIRD) and Ala-675. Mg(2+) is bound by residues Glu-715, Asn-719, and Asp-885. Position 887 (Ser-887) interacts with ATP. The 254-residue stretch at 1043–1296 (MAILREQGVN…MFRNARKNVG (254 aa)) folds into the Glutamine amidotransferase type-1 domain. Catalysis depends on Cys-1136, which acts as the Nucleophile. Residues 1232-1253 (TQYPANPNGSPEGITGITSTDG) are disordered. Active-site residues include His-1261 and Glu-1263.

This sequence in the N-terminal section; belongs to the FGAMS family. As to quaternary structure, monomer.

The protein resides in the cytoplasm. The enzyme catalyses N(2)-formyl-N(1)-(5-phospho-beta-D-ribosyl)glycinamide + L-glutamine + ATP + H2O = 2-formamido-N(1)-(5-O-phospho-beta-D-ribosyl)acetamidine + L-glutamate + ADP + phosphate + H(+). It participates in purine metabolism; IMP biosynthesis via de novo pathway; 5-amino-1-(5-phospho-D-ribosyl)imidazole from N(2)-formyl-N(1)-(5-phospho-D-ribosyl)glycinamide: step 1/2. Its function is as follows. Phosphoribosylformylglycinamidine synthase involved in the purines biosynthetic pathway. Catalyzes the ATP-dependent conversion of formylglycinamide ribonucleotide (FGAR) and glutamine to yield formylglycinamidine ribonucleotide (FGAM) and glutamate. This chain is Phosphoribosylformylglycinamidine synthase, found in Pseudoalteromonas translucida (strain TAC 125).